The primary structure comprises 480 residues: Iron-sulfur cluster assembly SufBD family protein slr0074 (480 aa).

The protein belongs to the iron-sulfur cluster assembly SufBD family.

This Synechocystis sp. (strain ATCC 27184 / PCC 6803 / Kazusa) protein is Iron-sulfur cluster assembly SufBD family protein slr0074.